The following is a 435-amino-acid chain: MGENHDHEQSIKRNSMIYNENERQLCNSNLKILQNKRALSKNDSSSKQQVQDSKPRRALTDVPVNNNPLSQNKRIVAGSKAAKVRREENIRPIVSAVQKRQIYNDRTAAEQEEEEEEEGEDDDAASIVNKKRRIDAEGVSEIVGWQDLDYVEKDDTAMVAEYSAEIFAFLYRRELETLPSHNYLLDKTSKYYLRPSMRTILVDWLVEVHEKFQCYPETLFLSINLMDRFLAKNKVTMNKLQLLAVTSLFIAAKFEEVNLPKLAEYAYITDGAASKNDIKNAEMFMLTSLEFNIGWPNPLNFLRRISKADDYDPVNRNIGKFILEYAYCCHQFIHLPPSTVSAMAMYIARRMTNRNKNELWNGTLQHYSGGIDPIHDEAFQSLCIDLVKDIASSKTHLDSLILKYKKPRYGSVYFQTFKWCTSEMHSNFQNLFNLK.

2 disordered regions span residues K36–S70 and N104–S126. The span at K41–D52 shows a compositional bias: low complexity. Over residues E110–A124 the composition is skewed to acidic residues.

Belongs to the cyclin family. Cyclin AB subfamily.

Its function is as follows. Required for efficient progression through S phase and possibly for the normal progression through meiosis. Interacts with CDC28. The sequence is that of S-phase entry cyclin-5 (CLB5) from Saccharomyces cerevisiae (strain ATCC 204508 / S288c) (Baker's yeast).